The sequence spans 37 residues: MKVNPSVKPICDKCRLIRRHGRVMVICSDPRHKQRQG.

It belongs to the bacterial ribosomal protein bL36 family.

The protein is Large ribosomal subunit protein bL36 (rpmJ) of Mycobacterium tuberculosis (strain ATCC 25618 / H37Rv).